The following is a 311-amino-acid chain: tRNA pseudouridine synthase B (311 aa).

D49 (nucleophile) is an active-site residue.

Belongs to the pseudouridine synthase TruB family. Type 1 subfamily.

It catalyses the reaction uridine(55) in tRNA = pseudouridine(55) in tRNA. Functionally, responsible for synthesis of pseudouridine from uracil-55 in the psi GC loop of transfer RNAs. This is tRNA pseudouridine synthase B from Rhizobium meliloti (strain 1021) (Ensifer meliloti).